A 70-amino-acid polypeptide reads, in one-letter code: SPbeta prophage-derived uncharacterized HTH-type transcriptional regulator YopO (70 aa).

An HTH cro/C1-type domain is found at 5 to 59 (IKQLMVKRGITIEELSRETMIDMQTLNKIIEMPDESDVTTIKLIALVLNVSIDEL). Residues 16–35 (IEELSRETMIDMQTLNKIIE) constitute a DNA-binding region (H-T-H motif).

In Bacillus subtilis (strain 168), this protein is SPbeta prophage-derived uncharacterized HTH-type transcriptional regulator YopO (yopO).